The primary structure comprises 368 residues: MDLSIPNPVADTTKAADAGTAGGQPLEIDALIVGAGPVGLFQVFELGLLEIKAHVIDSLKVVGGQCVELYPDKPIYDIPAVPSCTGQELTDNLLKQIEPFGPTFHLGQEVAVVERRDDGRFFVETSLGTRFITKTIFIAAGVGSFQPRTLKVDGIDKFDGKQLFYRVKDPSRFHGRNLVIVGGGDSALDWTLDLVGKAESVVMIHRRDGFRAAPASVAKMKELCEQMEMQFLVGQIGGYEEKDGVLTEIKVTGADGVTRRLPVDDVLVFFGLSPKLGPIAEWGLDLERKQIKVDTEKFQTNIPGIFAVGDINTYPGKKKLILSGFHEAALAAFGAAPYIFPEKKIHMQYTTTSPKLHKVLGVESPVFD.

Residues D57, Q65, Y70, V110, F145, D310, and T351 each contribute to the FAD site.

Belongs to the ferredoxin--NADP reductase type 2 family. Homodimer. The cofactor is FAD.

The enzyme catalyses 2 reduced [2Fe-2S]-[ferredoxin] + NADP(+) + H(+) = 2 oxidized [2Fe-2S]-[ferredoxin] + NADPH. In Cupriavidus pinatubonensis (strain JMP 134 / LMG 1197) (Cupriavidus necator (strain JMP 134)), this protein is Ferredoxin--NADP reductase 2.